A 284-amino-acid chain; its full sequence is Cell division protein DivIB (284 aa).

A disordered region spans residues 1–21 (MFGKRKDSKNKAMRDNEELTP). Residues 1–63 (MFGKRKDSKN…GLRKRRLQKR (63 aa)) lie on the Cytoplasmic side of the membrane. Residues 64–84 (VITLASIFGISAIISLYAILP) traverse the membrane as a helical segment. Residues 85-284 (VSRVSNIEIE…VGAYAYPYBK (200 aa)) lie on the Extracellular side of the membrane. The region spanning 86–156 (SRVSNIEIEG…NVVKFKVTEY (71 aa)) is the POTRA domain.

This sequence belongs to the FtsQ/DivIB family. DivIB subfamily.

The protein resides in the cell membrane. In terms of biological role, cell division protein that may be involved in stabilizing or promoting the assembly of the division complex. This is Cell division protein DivIB from Ligilactobacillus salivarius (strain CECT 5713) (Lactobacillus salivarius).